The following is a 289-amino-acid chain: Protease HtpX homolog (289 aa).

2 helical membrane passes run 5 to 27 (LWVRTGLLMAFLTGLLVGIGYLI) and 40 to 60 (ALFMNFFSYWFSDSIVLSWYN). A Zn(2+)-binding site is contributed by H133. E134 is an active-site residue. Position 137 (H137) interacts with Zn(2+). The next 2 helical transmembrane spans lie at 143–163 (TLIQTIAAVLAGAIMVLVNFA) and 181–201 (IVALILAIILAPIAATLIQLA). A Zn(2+)-binding site is contributed by E207.

This sequence belongs to the peptidase M48B family. Zn(2+) serves as cofactor.

The protein resides in the cell membrane. The sequence is that of Protease HtpX homolog from Pyrococcus furiosus (strain ATCC 43587 / DSM 3638 / JCM 8422 / Vc1).